The chain runs to 100 residues: Large ribosomal subunit protein bL21 (100 aa).

Belongs to the bacterial ribosomal protein bL21 family. As to quaternary structure, part of the 50S ribosomal subunit. Contacts protein L20.

Its function is as follows. This protein binds to 23S rRNA in the presence of protein L20. In Wolbachia pipientis subsp. Culex pipiens (strain wPip), this protein is Large ribosomal subunit protein bL21.